The primary structure comprises 885 residues: Translation initiation factor IF-2 (885 aa).

Disordered regions lie at residues 135-159 and 184-289; these read KAKAEAEAKAKAEAEAKAKAKAAAE and QAEA…PESM. Residues 184–232 are compositionally biased toward basic and acidic residues; sequence QAEATKRKQDEEAAKAAEKARLLAEENSKRWAEEERQRLEAERYSDHHI. Residues 253–266 show a composition bias toward basic residues; that stretch reads GRRARNKNTAKSKR. Positions 267-276 are enriched in basic and acidic residues; sequence GGKDARDGRE. The tr-type G domain maps to 385–554; the sequence is PRAPVVTIMG…LLQAEVLELK (170 aa). A G1 region spans residues 394–401; sequence GHVDHGKT. Residue 394-401 coordinates GTP; sequence GHVDHGKT. The interval 419-423 is G2; sequence GITQH. Residues 440–443 form a G3 region; sequence DTPG. GTP-binding positions include 440 to 444 and 494 to 497; these read DTPGH and NKMD. A G4 region spans residues 494–497; that stretch reads NKMD. Positions 530–532 are G5; the sequence is SAK.

This sequence belongs to the TRAFAC class translation factor GTPase superfamily. Classic translation factor GTPase family. IF-2 subfamily.

It localises to the cytoplasm. One of the essential components for the initiation of protein synthesis. Protects formylmethionyl-tRNA from spontaneous hydrolysis and promotes its binding to the 30S ribosomal subunits. Also involved in the hydrolysis of GTP during the formation of the 70S ribosomal complex. The polypeptide is Translation initiation factor IF-2 (Shewanella sp. (strain MR-7)).